Consider the following 128-residue polypeptide: Aspartate 1-decarboxylase (128 aa).

Residue S25 is the Schiff-base intermediate with substrate; via pyruvic acid of the active site. S25 carries the pyruvic acid (Ser) modification. A substrate-binding site is contributed by T57. The Proton donor role is filled by Y58. 73–75 (GAA) is a substrate binding site.

Belongs to the PanD family. In terms of assembly, heterooctamer of four alpha and four beta subunits. It depends on pyruvate as a cofactor. In terms of processing, is synthesized initially as an inactive proenzyme, which is activated by self-cleavage at a specific serine bond to produce a beta-subunit with a hydroxyl group at its C-terminus and an alpha-subunit with a pyruvoyl group at its N-terminus.

It is found in the cytoplasm. The enzyme catalyses L-aspartate + H(+) = beta-alanine + CO2. The protein operates within cofactor biosynthesis; (R)-pantothenate biosynthesis; beta-alanine from L-aspartate: step 1/1. Its function is as follows. Catalyzes the pyruvoyl-dependent decarboxylation of aspartate to produce beta-alanine. This is Aspartate 1-decarboxylase from Chlorobaculum parvum (strain DSM 263 / NCIMB 8327) (Chlorobium vibrioforme subsp. thiosulfatophilum).